The chain runs to 387 residues: BTB and MATH domain-containing protein 38 (387 aa).

In terms of domain architecture, MATH spans 79–204 (EGMLKLEIPN…NEMVTVTARV (126 aa)). Positions 228–295 (CDMTLVINKQ…IYPCHKPITS (68 aa)) constitute a BTB domain.

In Caenorhabditis elegans, this protein is BTB and MATH domain-containing protein 38 (bath-38).